The primary structure comprises 129 residues: Small ribosomal subunit protein uS11 (129 aa).

The protein belongs to the universal ribosomal protein uS11 family. In terms of assembly, part of the 30S ribosomal subunit. Interacts with proteins S7 and S18. Binds to IF-3.

Functionally, located on the platform of the 30S subunit, it bridges several disparate RNA helices of the 16S rRNA. Forms part of the Shine-Dalgarno cleft in the 70S ribosome. The chain is Small ribosomal subunit protein uS11 from Psychrobacter arcticus (strain DSM 17307 / VKM B-2377 / 273-4).